We begin with the raw amino-acid sequence, 486 residues long: D-mannonate oxidoreductase (486 aa).

Residue 25–36 (IVHLGCGAFHRA) coordinates NAD(+).

Belongs to the mannitol dehydrogenase family. UxuB subfamily.

The enzyme catalyses D-mannonate + NAD(+) = keto-D-fructuronate + NADH + H(+). The protein operates within carbohydrate metabolism; pentose and glucuronate interconversion. The polypeptide is D-mannonate oxidoreductase (uxuB) (Escherichia coli (strain K12)).